We begin with the raw amino-acid sequence, 230 residues long: Cytidylate kinase (230 aa).

Residue 10–18 participates in ATP binding; it reads GPAGSGKST.

This sequence belongs to the cytidylate kinase family. Type 1 subfamily.

The protein resides in the cytoplasm. It catalyses the reaction CMP + ATP = CDP + ADP. The catalysed reaction is dCMP + ATP = dCDP + ADP. In Leptospira borgpetersenii serovar Hardjo-bovis (strain L550), this protein is Cytidylate kinase.